An 828-amino-acid chain; its full sequence is MMKRNNEGIGGEGVANSPPDDTQQKRRRIQFEAVKMPAVQSVTELRSRTVAIQAAKLRQTVLIKNKRISDLERENERAKRRQLTDESNFLKVYNLFSELEKFIWAQTKDEFGEVKMTPSAPAGTDVQGMTSEQYHSFVDTAKGNLRIAFNSYAKARHDRTTETANFIARLKTLMADPKLNINDIHKELAAKTASLLAQIDKLQAEAHRVQSENHNLERKRRHMVDKNTLLESRIQEMEKLLEEAHFETEKQMRLACKYEARLILEHEAASGNATASSSATLNQSEKKMGSPGSPPSESTSREIEALRADRDEQAAIAARRLQELEDTNRKLQSMAQDISKLKMETQSSVPSDVITNSEEYRNLKKYYSLAIKEHERICKDLEDVTVERDQLRSVKENREKMMSEEHQKTIKEIQHQSEIHNTFYRVSHDSEVLRAEFETVKEEYNKTVKQSEWDEMKATVNTLRSLNKTMKSQMQRMKDREKASQKEHSAVKTELKTLKDQLEKSVLVPLEDSGNTSTEDANKIRAEYESLKREIRRIGAMDKQEKQRQLDREIQRHIADKVTELETLRKTNEALTNDEQTLSDELEVVCLTIEEEQERNAQLFMEKRDQEDRNLKMMNERMIQNQVQSRMREKLECLESKAQTDAQIAKMHEFEKKASDEVLNKLTENLQFKTSEVTRLSNMMEVHRKQTQELGFARDENQVKVDRCEAQLKQYQDLYGSKSREVEEAKFKRQRAEEELELVRVKYERAKRNDSAQTGDQVLQEANRQMKETLTCPSCKTRPKDCIMLKCYHLFCETCIKTMYDTRQRKCPKCNSNFGANDFHRIFI.

The segment at 1 to 25 is disordered; that stretch reads MMKRNNEGIGGEGVANSPPDDTQQK. An interaction with ubc-1 region spans residues 1–309; sequence MMKRNNEGIG…SREIEALRAD (309 aa). 2 coiled-coil regions span residues 53–92 and 185–251; these read QAAKLRQTVLIKNKRISDLERENERAKRRQLTDESNFLKV and HKEL…TEKQ. A compositionally biased stretch (low complexity) spans 269 to 298; that stretch reads ASGNATASSSATLNQSEKKMGSPGSPPSES. The segment at 269–304 is disordered; it reads ASGNATASSSATLNQSEKKMGSPGSPPSESTSREIE. 3 coiled-coil regions span residues 311–345, 460–616, and 660–756; these read DEQAAIAARRLQELEDTNRKLQSMAQDISKLKMET, VNTL…RNLK, and DEVL…NDSA. Residues 776–815 form an RING-type zinc finger; that stretch reads CPSCKTRPKDCIMLKCYHLFCETCIKTMYDTRQRKCPKCN.

It belongs to the BRE1 family. Interacts with ubc-1. Interacts with mrg-1.

It is found in the nucleus. The enzyme catalyses S-ubiquitinyl-[E2 ubiquitin-conjugating enzyme]-L-cysteine + [acceptor protein]-L-lysine = [E2 ubiquitin-conjugating enzyme]-L-cysteine + N(6)-ubiquitinyl-[acceptor protein]-L-lysine.. It participates in protein modification; protein ubiquitination. In terms of biological role, E3 ubiquitin-protein ligase that mediates monoubiquitination of 'Lys-117' of histone H2B. H2B 'Lys-117' ubiquitination gives a specific tag for epigenetic transcriptional activation and is also prerequisite for histone H3 'Lys-4' and 'Lys-79' methylation. Involved in regulating stem cell proliferative fate. In Caenorhabditis briggsae, this protein is E3 ubiquitin-protein ligase bre-1.